The primary structure comprises 317 residues: Transaldolase (317 aa).

The active-site Schiff-base intermediate with substrate is the lysine 126.

Belongs to the transaldolase family. Type 1 subfamily. As to quaternary structure, homodimer.

Its subcellular location is the cytoplasm. It catalyses the reaction D-sedoheptulose 7-phosphate + D-glyceraldehyde 3-phosphate = D-erythrose 4-phosphate + beta-D-fructose 6-phosphate. Its pathway is carbohydrate degradation; pentose phosphate pathway; D-glyceraldehyde 3-phosphate and beta-D-fructose 6-phosphate from D-ribose 5-phosphate and D-xylulose 5-phosphate (non-oxidative stage): step 2/3. Functionally, transaldolase is important for the balance of metabolites in the pentose-phosphate pathway. In Burkholderia thailandensis (strain ATCC 700388 / DSM 13276 / CCUG 48851 / CIP 106301 / E264), this protein is Transaldolase.